The sequence spans 228 residues: Claudin-10 (228 aa).

The chain crosses the membrane as a helical span at residues 1–21 (MASTASEIIAFMVSISGWVLV). Topologically, residues 22 to 80 (SSTLPTDYWKVSTIDGTVITTATYWANLWKACVTDSTGVSNCKDFPSMLALDGYIQACR) are extracellular. Residues 81-101 (GLMIAAVSLGFFGSIFALFGM) form a helical membrane-spanning segment. Residues 102-115 (KCTKVGGSDKAKAK) lie on the Cytoplasmic side of the membrane. The helical transmembrane segment at 116 to 136 (IACLAGIVFILSGLCSMTGCS) threads the bilayer. Residues 137 to 160 (LYANKITTEFFDPLFVEQKYELGA) lie on the Extracellular side of the membrane. A helical membrane pass occupies residues 161-181 (ALFIGWAGASLCIIGGVIFCF). Residues 182–228 (SISDNNKTPRYTYNGATSVMSSRTKYHGGEDFKTTNPSKQFDKNAYV) lie on the Cytoplasmic side of the membrane.

Belongs to the claudin family. As to quaternary structure, can form homodimers both in trans (interaction between CLDN10 molecules in opposing membranes) and in cis (interaction between CLDN10 molecules within one membrane). Interacts with CLDN19. As to expression, expressed in the kidney, eccrine sweat glands and in all layers of the epidermis. In the kidney, it is detected in the thick ascending limb of Henle's loop (TAL). In the sweat glands, it is expressed in cells from secretory portions, corresponding to the clear cells.

Its subcellular location is the cell junction. It localises to the tight junction. The protein localises to the cell membrane. It carries out the reaction Na(+)(in) = Na(+)(out). The enzyme catalyses Li(+)(in) = Li(+)(out). It catalyses the reaction K(+)(in) = K(+)(out). The catalysed reaction is Rb(+)(in) = Rb(+)(out). It carries out the reaction Cs(+)(in) = Cs(+)(out). The enzyme catalyses NH4(+)(in) = NH4(+)(out). It catalyses the reaction methylamine(out) = methylamine(in). The catalysed reaction is Mg(2+)(in) = Mg(2+)(out). It carries out the reaction Ca(2+)(in) = Ca(2+)(out). The enzyme catalyses Sr(2+)(in) = Sr(2+)(out). It catalyses the reaction chloride(in) = chloride(out). The catalysed reaction is nitrate(in) = nitrate(out). Functionally, forms paracellular channels: polymerizes in tight junction strands with cation- and anion-selective channels through the strands, conveying epithelial permeability in a process known as paracellular tight junction permeability. Its function is as follows. Forms cation-selective paracellular channels. In sweat glands and in the thick ascending limb (TAL) of Henle's loop in kidney, it controls paracellular sodium permeability which is essential for proper sweat production and renal function. Forms anion-selective paracellular channels. In renal proximal tubules, it conveys selective chloride over hydrogencarbonate anion permeability which is required for renal chloride reabsorption and salt homeostasis. This is Claudin-10 from Homo sapiens (Human).